Consider the following 288-residue polypeptide: Bifunctional protein FolD 2 (288 aa).

Residues 166-168 (GRS) and S191 each bind NADP(+).

The protein belongs to the tetrahydrofolate dehydrogenase/cyclohydrolase family. In terms of assembly, homodimer.

It catalyses the reaction (6R)-5,10-methylene-5,6,7,8-tetrahydrofolate + NADP(+) = (6R)-5,10-methenyltetrahydrofolate + NADPH. It carries out the reaction (6R)-5,10-methenyltetrahydrofolate + H2O = (6R)-10-formyltetrahydrofolate + H(+). The protein operates within one-carbon metabolism; tetrahydrofolate interconversion. Its function is as follows. Catalyzes the oxidation of 5,10-methylenetetrahydrofolate to 5,10-methenyltetrahydrofolate and then the hydrolysis of 5,10-methenyltetrahydrofolate to 10-formyltetrahydrofolate. The sequence is that of Bifunctional protein FolD 2 from Frankia casuarinae (strain DSM 45818 / CECT 9043 / HFP020203 / CcI3).